A 202-amino-acid chain; its full sequence is Helix-loop-helix protein 10 (202 aa).

Disordered stretches follow at residues 1–26 and 83–112; these read MESS…NSEL and QNKS…GKID. Positions 17-26 are enriched in polar residues; sequence STGNHGNSEL. A basic motif region spans residues 121 to 134; that stretch reads TRRYEANARERNRV. Residues 121 to 172 enclose the bHLH domain; it reads TRRYEANARERNRVQQLSKMFDQLRVCLPIEDDAKISKLATLKVASSYIGYL. The helix-loop-helix motif stretch occupies residues 135-172; the sequence is QQLSKMFDQLRVCLPIEDDAKISKLATLKVASSYIGYL.

As to quaternary structure, heterodimer with hlh-2. In terms of tissue distribution, expressed in intestine, neurons in head, body and tail, and in body hypodermis, and vulva. Expressed in neurons in the male-specific genital sensilla (simple sense organs) known as rays.

It localises to the nucleus. The protein resides in the cytoplasm. Its function is as follows. Probable transcription factor which binds the E box motif 5'-CA[TC][AG]TG-3'. The sequence is that of Helix-loop-helix protein 10 from Caenorhabditis elegans.